The primary structure comprises 137 residues: Putative pre-16S rRNA nuclease (137 aa).

Belongs to the YqgF nuclease family.

It is found in the cytoplasm. Could be a nuclease involved in processing of the 5'-end of pre-16S rRNA. The protein is Putative pre-16S rRNA nuclease of Oceanobacillus iheyensis (strain DSM 14371 / CIP 107618 / JCM 11309 / KCTC 3954 / HTE831).